A 345-amino-acid chain; its full sequence is Phosphoribosylformylglycinamidine cyclo-ligase (345 aa).

This sequence belongs to the AIR synthase family.

The protein resides in the cytoplasm. The catalysed reaction is 2-formamido-N(1)-(5-O-phospho-beta-D-ribosyl)acetamidine + ATP = 5-amino-1-(5-phospho-beta-D-ribosyl)imidazole + ADP + phosphate + H(+). It functions in the pathway purine metabolism; IMP biosynthesis via de novo pathway; 5-amino-1-(5-phospho-D-ribosyl)imidazole from N(2)-formyl-N(1)-(5-phospho-D-ribosyl)glycinamide: step 2/2. This Enterobacter sp. (strain 638) protein is Phosphoribosylformylglycinamidine cyclo-ligase.